The primary structure comprises 546 residues: Putative inactive G-type lectin S-receptor-like serine/threonine-protein kinase SRK (546 aa).

The first 31 residues, 1 to 31 (MRGELPNKHHSYTFFVFLFFFLILFPDLSIS), serve as a signal peptide directing secretion. The Extracellular segment spans residues 32–441 (VNTLSATESL…FGERRTIRGK (410 aa)). Residues 34–154 (TLSATESLTI…KINESDEFLW (121 aa)) enclose the Bulb-type lectin domain. N-linked (GlcNAc...) asparagine glycans are attached at residues N46, N120, N147, and N243. The EGF-like; atypical domain occupies 293–329 (PKDTCDLYGICGPYAYCDMSTSPTCNCIKGFQPLSPQ). 4 cysteine pairs are disulfide-bonded: C297-C309, C303-C317, C378-C403, and C382-C388. The 81-residue stretch at 348–428 (CGEDRFFRLM…DGQDLFVRLA (81 aa)) folds into the PAN domain. A glycan (N-linked (GlcNAc...) asparagine) is linked at N387. The chain crosses the membrane as a helical span at residues 442-462 (IIGLIIGISLMLVLSFIIYCF). Residues 463–546 (WKKKQKRARA…IVYKGRLLDG (84 aa)) are Cytoplasmic-facing. The Protein kinase domain maps to 524-546 (FSDSNILGRGGFGIVYKGRLLDG). 530–538 (LGRGGFGIV) is an ATP binding site.

Belongs to the protein kinase superfamily. Ser/Thr protein kinase family.

It is found in the cell membrane. In terms of biological role, truncated and inactivated form of SRK, the female specificity determinant of self-incompatibility when active. Most A.thaliana cultivars contain such an inactive form and thus, are self-fertiles. This chain is Putative inactive G-type lectin S-receptor-like serine/threonine-protein kinase SRK (PSEUDOSRKA), found in Arabidopsis thaliana (Mouse-ear cress).